A 1174-amino-acid chain; its full sequence is Protein kinase C-like (1174 aa).

The region spanning 1–68 (MANVEETVAN…LRDLDLQRTT (68 aa)) is the REM-1 1 domain. Over residues 69 to 84 (SGVDNMSLQPGRSPTN) the composition is skewed to polar residues. Residues 69–140 (SGVDNMSLQP…PPPATANKRP (72 aa)) form a disordered region. Low complexity predominate over residues 96-123 (GYAQQDQGGYGGPQSQYSQLSGGEALQP). Positions 124-134 (PRAPFAAPPPA) are enriched in pro residues. Positions 149–226 (KYDTPHLGPR…LKRYEDLHVD (78 aa)) constitute an REM-1 2 domain. The 121-residue stretch at 229–349 (GDGDDNDSLD…MRRKKLETEL (121 aa)) folds into the C2 domain. A disordered region spans residues 358–406 (DKMGGHTGIQPDMQFQPPPGQSPAGGPGGGPTPAGVRPPGAPQPQTGPI). The span at 380 to 389 (PAGGPGGGPT) shows a compositional bias: gly residues. Phorbol-ester/DAG-type zinc fingers lie at residues 458 to 506 (GHKF…VTKC) and 526 to 576 (PHRF…PDFC). Residues 593 to 842 (TRRGQSSSGP…PAANTQGTGK (250 aa)) form a disordered region. A compositionally biased stretch (polar residues) spans 596-611 (GQSSSGPGMSQRTLRP). The segment covering 624-636 (QSPGQPGQESPTQ) has biased composition (low complexity). Over residues 648–657 (SPPPGPPRQP) the composition is skewed to pro residues. Over residues 658 to 709 (SYPSSATSVDAARASYSTTGTASTGAPTSPTSGSRPPSGPRTQSSVAAAAAA) the composition is skewed to low complexity. Over residues 720–744 (RSNTDYSPQSGRSSGSGYPTEQRMS) the composition is skewed to polar residues. A compositionally biased stretch (pro residues) spans 786–802 (LPQPPPPQSPPQHPQQP). Residues 808 to 820 (KMPEQQALTQQPP) show a composition bias toward polar residues. Residues 849–1108 (FNFLAVLGKG…AQEIMSHAFF (260 aa)) enclose the Protein kinase domain. Residues 855 to 863 (LGKGNFGKV) and lysine 878 each bind ATP. Catalysis depends on aspartate 974, which acts as the Proton acceptor. The AGC-kinase C-terminal domain maps to 1109-1174 (RNINWDDIYH…RGFSYSADFA (66 aa)).

Belongs to the protein kinase superfamily. AGC Ser/Thr protein kinase family. PKC subfamily.

The enzyme catalyses L-seryl-[protein] + ATP = O-phospho-L-seryl-[protein] + ADP + H(+). It catalyses the reaction L-threonyl-[protein] + ATP = O-phospho-L-threonyl-[protein] + ADP + H(+). This Cochliobolus heterostrophus (Southern corn leaf blight fungus) protein is Protein kinase C-like (PKC1).